The following is a 454-amino-acid chain: Bifunctional protein GlmU (454 aa).

Residues 1 to 228 (MTLPLHVVIL…PQDVEGANDP (228 aa)) form a pyrophosphorylase region. UDP-N-acetyl-alpha-D-glucosamine is bound by residues 10-13 (LAAG), Lys-24, Gln-76, 81-82 (GT), 103-105 (YGD), Gly-138, Glu-153, Asn-168, and Asn-226. Asp-105 is a Mg(2+) binding site. Asn-226 contributes to the Mg(2+) binding site. The linker stretch occupies residues 229-249 (WQLAQLERAWQLRAARALCLQ). The segment at 250-454 (GVRMADPARV…IEGWERPKKK (205 aa)) is N-acetyltransferase. UDP-N-acetyl-alpha-D-glucosamine contacts are provided by Arg-332 and Lys-350. Catalysis depends on His-362, which acts as the Proton acceptor. The UDP-N-acetyl-alpha-D-glucosamine site is built by Tyr-365 and Asn-376. Residues Ala-379, 385–386 (NY), Ser-404, Ala-422, and Arg-439 contribute to the acetyl-CoA site.

In the N-terminal section; belongs to the N-acetylglucosamine-1-phosphate uridyltransferase family. It in the C-terminal section; belongs to the transferase hexapeptide repeat family. Homotrimer. Requires Mg(2+) as cofactor.

The protein localises to the cytoplasm. The catalysed reaction is alpha-D-glucosamine 1-phosphate + acetyl-CoA = N-acetyl-alpha-D-glucosamine 1-phosphate + CoA + H(+). It carries out the reaction N-acetyl-alpha-D-glucosamine 1-phosphate + UTP + H(+) = UDP-N-acetyl-alpha-D-glucosamine + diphosphate. Its pathway is nucleotide-sugar biosynthesis; UDP-N-acetyl-alpha-D-glucosamine biosynthesis; N-acetyl-alpha-D-glucosamine 1-phosphate from alpha-D-glucosamine 6-phosphate (route II): step 2/2. The protein operates within nucleotide-sugar biosynthesis; UDP-N-acetyl-alpha-D-glucosamine biosynthesis; UDP-N-acetyl-alpha-D-glucosamine from N-acetyl-alpha-D-glucosamine 1-phosphate: step 1/1. It participates in bacterial outer membrane biogenesis; LPS lipid A biosynthesis. Its function is as follows. Catalyzes the last two sequential reactions in the de novo biosynthetic pathway for UDP-N-acetylglucosamine (UDP-GlcNAc). The C-terminal domain catalyzes the transfer of acetyl group from acetyl coenzyme A to glucosamine-1-phosphate (GlcN-1-P) to produce N-acetylglucosamine-1-phosphate (GlcNAc-1-P), which is converted into UDP-GlcNAc by the transfer of uridine 5-monophosphate (from uridine 5-triphosphate), a reaction catalyzed by the N-terminal domain. The polypeptide is Bifunctional protein GlmU (Xanthomonas campestris pv. campestris (strain 8004)).